Here is a 524-residue protein sequence, read N- to C-terminus: Lycopene epsilon cyclase, chloroplastic (524 aa).

Residues 1 to 45 constitute a chloroplast transit peptide; sequence MECVGARNFAAMAVSTFPSWSCRRKFPVVKRYSYRNIRFGLCSVR. 111–139 serves as a coordination point for NAD(+); sequence LVVIGCGPAGLALAAESAKLGLKVGLIGP. 2 consecutive transmembrane segments (helical) span residues 441 to 461 and 475 to 495; these read FFLF…RSFF and FLGS…MFVI.

It belongs to the lycopene cyclase family.

The protein localises to the plastid. Its subcellular location is the chloroplast membrane. The catalysed reaction is a carotenoid psi-end group = a carotenoid epsilon-end group. The protein operates within carotenoid biosynthesis; alpha-zeacarotene biosynthesis. Its pathway is carotenoid biosynthesis; delta-carotene biosynthesis. Its function is as follows. Involved in carotenoid biosynthesis. Catalyzes the single epsilon-cyclization reaction which converts lycopene to delta-carotene and neurosporene to alpha-zeacarotene. Required for lutein biosynthesis. This Arabidopsis thaliana (Mouse-ear cress) protein is Lycopene epsilon cyclase, chloroplastic.